The sequence spans 152 residues: Large ribosomal subunit protein eL14 (152 aa).

The protein belongs to the eukaryotic ribosomal protein eL14 family.

The chain is Large ribosomal subunit protein eL14 (RPL14) from Lumbricus rubellus (Humus earthworm).